The chain runs to 584 residues: MIIEGKIIKIAGPVIIADGMRGAQMYEMVRVGEQKLIGEIIELEGDTATIQVYEETAGIQPGEVVESTGGPLSVELGPGVMGSIFDGIQRPLELIREESGDFIARGVDAESISKEKKWTFKPVAKVGDKVKGGDVLGEVQETSAVLQKILVPPMIEGELTSIASEGEYTVLEDIAEVATDKGDEKIQMLQKWPVRKGRPYVDKLDPDVPLVTGQRAQDTFFSVAKGGAAAIPGPFGSGKTVTQQQLAKWADADIVIYIGCGERGNEMTEVLTEFPYLDDPKTGNPLMDRTVLIANTSNMPVAAREACVYTGITIAEYYRDQGYDVALMADSTSRWAEAMREISGRLEEMPGEEGYPAYLASRLAQFYERAGRVNTIGTTSDVASITVVGAVSPPGGDLSEPVTQNTLRICKVFWALDASLADKRHFPSIDWLQSYSLYVDSIEGWWAENVAADWRETRDQAMILLQKESELQEIVQLVGPDALPEADQATLETTRMLREDFLQQNAFDDIDTYCPPVKQYNMLKTILLFHKEALAAVGRGVPIQNIVALPVKEEIGKMKYIPQDEFAAKCEEIQAAITKQCSEA.

233–240 (GPFGSGKT) provides a ligand contact to ATP.

It belongs to the ATPase alpha/beta chains family. As to quaternary structure, has multiple subunits with at least A(3), B(3), C, D, E, F, H, I and proteolipid K(x).

It localises to the cell membrane. The enzyme catalyses ATP + H2O + 4 H(+)(in) = ADP + phosphate + 5 H(+)(out). Component of the A-type ATP synthase that produces ATP from ADP in the presence of a proton gradient across the membrane. The A chain is the catalytic subunit. The chain is A-type ATP synthase subunit A from Methanobrevibacter smithii (strain ATCC 35061 / DSM 861 / OCM 144 / PS).